Here is a 1025-residue protein sequence, read N- to C-terminus: Multidrug resistance protein MdtC (1025 aa).

Transmembrane regions (helical) follow at residues 3–23 (FFAL…AITL), 333–353 (EVEQ…FLFL), 360–380 (IIPA…MYLC), 387–407 (LSLM…IVVL), 431–451 (VGFT…PLLL), 463–483 (FAVT…TLTP), 528–548 (LVGV…ISIP), 853–873 (VILI…LYES), 875–895 (VHPL…LLAL), 897–917 (LFNA…IGIV), 953–973 (PIMM…LSGG), and 984–1004 (ITIV…TPVV).

It belongs to the resistance-nodulation-cell division (RND) (TC 2.A.6) family. MdtC subfamily. In terms of assembly, part of a tripartite efflux system composed of MdtA, MdtB and MdtC. MdtC forms a heteromultimer with MdtB.

Its subcellular location is the cell inner membrane. In Shigella boydii serotype 4 (strain Sb227), this protein is Multidrug resistance protein MdtC.